A 256-amino-acid polypeptide reads, in one-letter code: DNA repair protein RecO (256 aa).

It belongs to the RecO family.

Functionally, involved in DNA repair and RecF pathway recombination. The chain is DNA repair protein RecO from Desulforamulus reducens (strain ATCC BAA-1160 / DSM 100696 / MI-1) (Desulfotomaculum reducens).